A 138-amino-acid polypeptide reads, in one-letter code: MLQPARRKYRKEQKGRNTGIATRGNSVAFGDFGLKSTDRGRLTARQIEAARRAISRHVKRGGRIWIRVFPDKPISTKPAEVRMGNGKGNPEYYVAEIQPGKVLYEIVGVPEELAREAFRLAAAKLPLRTTFVSRQIGA.

The segment covering M1–Q13 has biased composition (basic residues). The segment at M1–T22 is disordered.

It belongs to the universal ribosomal protein uL16 family. Part of the 50S ribosomal subunit.

In terms of biological role, binds 23S rRNA and is also seen to make contacts with the A and possibly P site tRNAs. The sequence is that of Large ribosomal subunit protein uL16 from Delftia acidovorans (strain DSM 14801 / SPH-1).